A 229-amino-acid polypeptide reads, in one-letter code: Sugar fermentation stimulation protein homolog (229 aa).

It belongs to the SfsA family.

This chain is Sugar fermentation stimulation protein homolog, found in Caldanaerobacter subterraneus subsp. tengcongensis (strain DSM 15242 / JCM 11007 / NBRC 100824 / MB4) (Thermoanaerobacter tengcongensis).